Here is a 140-residue protein sequence, read N- to C-terminus: MANRTIIAFDFGTKSIGVAIGQEVTGTARALTAFKAQDGTPDWQQVEKLLKEWQPNLVVVGLPLNMDGTEQPLTARARRFANRLHGRFGVQIALQDERLSTVEARANLFDRGGYRALDKGSVDAASAVIILESWFDEQAG.

It belongs to the YqgF nuclease family.

The protein localises to the cytoplasm. Its function is as follows. Could be a nuclease involved in processing of the 5'-end of pre-16S rRNA. The sequence is that of Putative pre-16S rRNA nuclease from Yersinia pseudotuberculosis serotype IB (strain PB1/+).